The sequence spans 309 residues: Homoserine O-succinyltransferase (309 aa).

Residue Cys142 is the Acyl-thioester intermediate of the active site. Residues Lys163 and Ser192 each coordinate substrate. The active-site Proton acceptor is His235. Residue Glu237 is part of the active site. A substrate-binding site is contributed by Arg249.

It belongs to the MetA family.

The protein resides in the cytoplasm. The enzyme catalyses L-homoserine + succinyl-CoA = O-succinyl-L-homoserine + CoA. Its pathway is amino-acid biosynthesis; L-methionine biosynthesis via de novo pathway; O-succinyl-L-homoserine from L-homoserine: step 1/1. In terms of biological role, transfers a succinyl group from succinyl-CoA to L-homoserine, forming succinyl-L-homoserine. This is Homoserine O-succinyltransferase from Klebsiella pneumoniae subsp. pneumoniae (strain ATCC 700721 / MGH 78578).